Reading from the N-terminus, the 378-residue chain is UPF0754 membrane protein SH1116 (378 aa).

A run of 2 helical transmembrane segments spans residues 4 to 24 (FLVI…TNVI) and 358 to 378 (SLGF…AIFV).

Belongs to the UPF0754 family.

Its subcellular location is the cell membrane. In Staphylococcus haemolyticus (strain JCSC1435), this protein is UPF0754 membrane protein SH1116.